A 667-amino-acid polypeptide reads, in one-letter code: Soluble guanylate cyclase 89Da (667 aa).

His104 provides a ligand contact to heme. Residues 337–364 form a disordered region; sequence AQEFSESHPVDDDESAREDEIDPATGER. Residues 347-358 show a composition bias toward acidic residues; it reads DDDESAREDEID. Positions 427 to 455 form a coiled coil; it reads QHCSKLEIMFEKEEQRSDELEKSLELADS. The Guanylate cyclase domain maps to 491-617; the sequence is SVIFLEVMNV…DTVNTASRME (127 aa).

This sequence belongs to the adenylyl cyclase class-4/guanylyl cyclase family. Heterodimer; with Gyc88E, in the presence of magnesium or manganese. Heme is required as a cofactor.

It is found in the cytoplasm. It carries out the reaction GTP = 3',5'-cyclic GMP + diphosphate. Probably not activated by nitric oxide (NO). Heterodimer also exhibits some stimulation, some compounds (SIN-1 and two of the NONOates) that were ineffective at stimulating Gyc-88E alone did stimulate the heterodimer. Its function is as follows. Heterodimers with Gyc-89Da and Gyc-89Db are activated in response to changing oxygen concentrations, alerting flies to hypoxic environments. Under normal oxygen concentrations, oxygen binds to the heme group and results in low levels of guanylyl cyclase activity. When exposed to reduced oxygen concentrations, the oxygen dissociates from the heme group resulting in activation of the enzyme. The chain is Soluble guanylate cyclase 89Da from Drosophila melanogaster (Fruit fly).